Reading from the N-terminus, the 810-residue chain is MPGGMAPLKKPRNPTKLPLALNPTKSKDVLAVLAERNQAIIPVGAWVEPASPNWSGIPAHTSAYVVEEEIKEQQRRKQESLRHFQRQVRHRVNQRVKLRKKQQLHKSYKAAEKEGSIAMQYSDLAHLSSKRTSVFPSNLNAAVGRFRLPTSQVLGDAIEDGENQLFQQQAQALSQTMKQARHQLASFKTVSEKKTPVLPNGGRKGCPTQEGLGCGKISFVAVSEERDALFVSCQQDFLSEDKEKAFSKVQKVKFKNPLSVVIKEDERKQLHPHSLQAVLPEAQDYFVEVQSGLPESQSDVIDVQNVEPKASRIEPKTLGVEPDTQATGVECQTTEPEGQAVKTGIQDVPKVQTVELDGNTELEAQDFLPSHQAFLSRDTDCLPNCQYQDSLPKGHCVLPNYWNVLPKYQNQHFLPVDQEFLPRNQLALPKEQNHPLQCQKQDLLPREQFPLLLRHQDQREPHVLPKCQEHDVLSKAQNYLHNYQEQDLQLQNQEVNSKEPLSDITDGKGREIFSLDMFSKKPSTFMRRERGDEELPLDSPQCAPPQIQDQVFLREQSQQPSVRTAERWQEDLYLSGHECLPPRQRRDTCSRQQQVYEEYRSGLSTEQQALLAFQSGVDQEEDKKERQKQYLRHRRLFMDIEREQVKEQNRQRERKRRIEKIKKKKEQQRYAEEQRLLRMNCHEEPYSEEKISDVLAQLQLEEIKGAREKQQQREKEYIRYVEALRAQVQEKMKLYNITLPPLCCCGPDFWDAHPDTCANNCIFYKNYRAYNRALHSVINSSDISEGNATLRNAIRNFASAHRRTPKQSLH.

3 coiled-coil regions span residues Val65–Arg89, Asp160–Thr189, and Met638–Arg669.

Interacts with POC5, POC1B, CETN2 and FAM161A.

The protein localises to the cytoplasm. Its subcellular location is the cytoskeleton. It is found in the microtubule organizing center. The protein resides in the centrosome. It localises to the centriole. The protein localises to the centriolar satellite. In terms of biological role, plays an important role in primary cilium assembly, maintenance, and length regulation. Interacts with centriole inner scaffold proteins to promote proper centriole size and integrity and assembly of functional cilia. Required for the recruitment of both the inner scaffold protein POC1B and the distal SFI1/CETN2 complex to centrioles. The polypeptide is Coiled-coil domain-containing protein 15 (Ccdc15) (Mus musculus (Mouse)).